The chain runs to 453 residues: Bifunctional protein GlmU (453 aa).

Positions 1–225 (MHAHVILAAG…AEEALGVNTR (225 aa)) are pyrophosphorylase. UDP-N-acetyl-alpha-D-glucosamine contacts are provided by residues 7 to 10 (LAAG), K21, Q72, and 77 to 78 (GT). A Mg(2+)-binding site is contributed by D102. UDP-N-acetyl-alpha-D-glucosamine is bound by residues G138, E152, N167, and N223. N223 is a Mg(2+) binding site. The interval 226-246 (EELARVEGVLLRRLRAEWMGK) is linker. The interval 247-453 (GVRMILPETI…GYALRKLGEG (207 aa)) is N-acetyltransferase. Positions 329 and 347 each coordinate UDP-N-acetyl-alpha-D-glucosamine. The Proton acceptor role is filled by H359. The UDP-N-acetyl-alpha-D-glucosamine site is built by Y362 and N373. Residues A376, 382 to 383 (NY), S401, A419, and R436 each bind acetyl-CoA.

The protein in the N-terminal section; belongs to the N-acetylglucosamine-1-phosphate uridyltransferase family. It in the C-terminal section; belongs to the transferase hexapeptide repeat family. Homotrimer. It depends on Mg(2+) as a cofactor.

The protein resides in the cytoplasm. The catalysed reaction is alpha-D-glucosamine 1-phosphate + acetyl-CoA = N-acetyl-alpha-D-glucosamine 1-phosphate + CoA + H(+). The enzyme catalyses N-acetyl-alpha-D-glucosamine 1-phosphate + UTP + H(+) = UDP-N-acetyl-alpha-D-glucosamine + diphosphate. It participates in nucleotide-sugar biosynthesis; UDP-N-acetyl-alpha-D-glucosamine biosynthesis; N-acetyl-alpha-D-glucosamine 1-phosphate from alpha-D-glucosamine 6-phosphate (route II): step 2/2. Its pathway is nucleotide-sugar biosynthesis; UDP-N-acetyl-alpha-D-glucosamine biosynthesis; UDP-N-acetyl-alpha-D-glucosamine from N-acetyl-alpha-D-glucosamine 1-phosphate: step 1/1. The protein operates within bacterial outer membrane biogenesis; LPS lipid A biosynthesis. Catalyzes the last two sequential reactions in the de novo biosynthetic pathway for UDP-N-acetylglucosamine (UDP-GlcNAc). The C-terminal domain catalyzes the transfer of acetyl group from acetyl coenzyme A to glucosamine-1-phosphate (GlcN-1-P) to produce N-acetylglucosamine-1-phosphate (GlcNAc-1-P), which is converted into UDP-GlcNAc by the transfer of uridine 5-monophosphate (from uridine 5-triphosphate), a reaction catalyzed by the N-terminal domain. This chain is Bifunctional protein GlmU, found in Thermus thermophilus (strain ATCC 27634 / DSM 579 / HB8).